A 778-amino-acid polypeptide reads, in one-letter code: Dolichyl-phosphate-mannose--protein mannosyltransferase 4 (778 aa).

The segment covering 1–28 (MASKSEKAVKKAQKLSKEPSVELTDTKS) has biased composition (basic and acidic residues). The tract at residues 1–44 (MASKSEKAVKKAQKLSKEPSVELTDTKSSDNVTPKQKSPNSTEE) is disordered. The span at 29-41 (SDNVTPKQKSPNS) shows a compositional bias: polar residues. A glycan (N-linked (GlcNAc...) asparagine) is linked at Asn40. 7 helical membrane passes run 60-80 (LAFV…LNLP), 103-123 (FFDL…KLAG), 145-165 (VTIR…VFLI), 196-216 (ILLD…YVRF), 223-243 (PFSR…SCTI), 248-268 (VGFF…WYLW), and 288-308 (FCLI…HFNI). Residue Asn335 is glycosylated (N-linked (GlcNAc...) asparagine). MIR domains are found at residues 336–396 (STIL…ILPA), 408–467 (NVPV…VVMS), and 474–529 (RPLY…FDDI). The next 4 helical transmembrane spans lie at 608-628 (WWII…EILL), 644-664 (FYRS…PFFI), 669-689 (LFLH…GAFI), and 726-746 (VIEL…FTFF).

The protein belongs to the glycosyltransferase 39 family.

It localises to the endoplasmic reticulum membrane. It carries out the reaction a di-trans,poly-cis-dolichyl beta-D-mannosyl phosphate + L-seryl-[protein] = 3-O-(alpha-D-mannosyl)-L-seryl-[protein] + a di-trans,poly-cis-dolichyl phosphate + H(+). The enzyme catalyses a di-trans,poly-cis-dolichyl beta-D-mannosyl phosphate + L-threonyl-[protein] = 3-O-(alpha-D-mannosyl)-L-threonyl-[protein] + a di-trans,poly-cis-dolichyl phosphate + H(+). Its pathway is protein modification; protein glycosylation. Functionally, transfers mannose from Dol-P-mannose to Ser or Thr residues on proteins. Required for normal cell wall and septum formation. The protein is Dolichyl-phosphate-mannose--protein mannosyltransferase 4 (ogm4) of Schizosaccharomyces pombe (strain 972 / ATCC 24843) (Fission yeast).